Reading from the N-terminus, the 109-residue chain is Putative antitoxin HigA3 (109 aa).

Residues 41 to 97 (LAEIRKALGHARQADVAALMGVSQARVSKLESGDLSHTELGTLQAYVAALGGHLRIV) form the HTH cro/C1-type domain. Residues 53-72 (QADVAALMGVSQARVSKLES) constitute a DNA-binding region (H-T-H motif).

In terms of biological role, putative antitoxin component of a type II toxin-antitoxin (TA) system. Its cognate toxin would be HigB3. This chain is Putative antitoxin HigA3, found in Mycobacterium tuberculosis (strain ATCC 25618 / H37Rv).